Consider the following 447-residue polypeptide: Phosphoglucosamine mutase (447 aa).

The Phosphoserine intermediate role is filled by Ser-100. Residues Ser-100, Asp-240, Asp-242, and Asp-244 each coordinate Mg(2+). Phosphoserine is present on Ser-100.

It belongs to the phosphohexose mutase family. Requires Mg(2+) as cofactor. In terms of processing, activated by phosphorylation.

The catalysed reaction is alpha-D-glucosamine 1-phosphate = D-glucosamine 6-phosphate. Functionally, catalyzes the conversion of glucosamine-6-phosphate to glucosamine-1-phosphate. This chain is Phosphoglucosamine mutase, found in Clostridium botulinum (strain Alaska E43 / Type E3).